Here is a 379-residue protein sequence, read N- to C-terminus: MGEFVFCYGSQNKKCLSKYIKQTKNSYKLYLSDNNYIYFDKIKTQDCQKYIEVDFNNSFEFLKFIVKKKIYCDMHNRNCKSFCFHNNYFKYIVENKHYDIIKFFCKKFIPLIKSNRNIYSFPYSLPMYVDLDDFNYIFKHSCLEDIYPSIIQVLRYNRDITIEFMDDIFSIYKNKLTKLFINDNILDLDSKFEIGPQIFLTPSFVKDDVNLFDFIIEEICNLTSEIDKTKLDKKQLKLLENFKVKFDSEFICEIIYSRMLHDFEDILQVEDTYFCPKIFKQMLPNISDLINSLTHNRIIQFIIAYNIVEYMGILCDFIGDTEPKFINNMLIKATSTEMGQLLIDYGADYEKLYRSTSFKNCSDCVKKLVKKIIKETSDS.

This sequence belongs to the mimivirus L17x/L18x family.

This is an uncharacterized protein from Acanthamoeba polyphaga mimivirus (APMV).